The primary structure comprises 146 residues: Hemoglobin subunit beta (146 aa).

Val1 bears the N-acetylvaline mark. The region spanning 2 to 146 (HLTAEEKSLV…VANALAHKYH (145 aa)) is the Globin domain. The residue at position 12 (Thr12) is a Phosphothreonine. Phosphoserine is present on Ser44. Lys59 is modified (N6-acetyllysine). His63 is a heme b binding site. Lys82 carries the N6-acetyllysine modification. His92 serves as a coordination point for heme b. Cys93 bears the S-nitrosocysteine mark. N6-acetyllysine is present on Lys144.

The protein belongs to the globin family. As to quaternary structure, heterotetramer of two alpha chains and two beta chains. In terms of tissue distribution, red blood cells.

Functionally, involved in oxygen transport from the lung to the various peripheral tissues. The chain is Hemoglobin subunit beta (HBB) from Vulpes vulpes (Red fox).